Consider the following 236-residue polypeptide: Ribonuclease HIII (236 aa).

The 228-residue stretch at 9–236 (LYLIGSDESG…NVASFLKQLA (228 aa)) folds into the RNase H type-2 domain. A divalent metal cation-binding residues include Asp-15, Glu-16, and Asp-122.

It belongs to the RNase HII family. RnhC subfamily. The cofactor is a divalent metal cation.

The protein resides in the cytoplasm. It catalyses the reaction Endonucleolytic cleavage to 5'-phosphomonoester.. Functionally, endonuclease that specifically degrades the RNA of RNA-DNA hybrids. The chain is Ribonuclease HIII (rnhC) from Mycoplasma pneumoniae (strain ATCC 29342 / M129 / Subtype 1) (Mycoplasmoides pneumoniae).